Consider the following 565-residue polypeptide: Ubiquitin carboxyl-terminal hydrolase 21 (565 aa).

Positions Met1–Glu14 are enriched in basic and acidic residues. 3 disordered regions span residues Met1 to Pro103, Ala109 to Gly128, and Leu142 to Phe163. The segment covering Ala42–Gly57 has biased composition (pro residues). Positions Pro58–Arg70 are enriched in basic and acidic residues. Positions Gly71–Leu82 are enriched in low complexity. The short motif at Glu134 to Arg152 is the Nuclear export signal element. Residues Val212–Met558 enclose the USP domain. The Nucleophile role is filled by Cys221. Positions 384, 387, 437, and 440 each coordinate Zn(2+). The Proton acceptor role is filled by His518.

This sequence belongs to the peptidase C19 family. USP21 subfamily. Interacts with BEND3.

It localises to the cytoplasm. It is found in the nucleus. The enzyme catalyses Thiol-dependent hydrolysis of ester, thioester, amide, peptide and isopeptide bonds formed by the C-terminal Gly of ubiquitin (a 76-residue protein attached to proteins as an intracellular targeting signal).. Deubiquitinating enzyme that hydrolyzes 'Lys-6'- and 'Lys-11'-linked polyubiquitin. Also hydrolyzes heterotypic (mixed and branched) and homotypic chains. Important regulator of energy metabolism. Glucose and fatty acids trigger its nuclear translocation by CBP-dependent acetylation. In the nucleus, deubiquitinates and stabilizes the nuclear receptor PPARD regulating the expression of various genes involved in glucose and lipid metabolism and oxidative phosphorylation. Also acts as a negative regulator of the ribosome quality control (RQC) by mediating deubiquitination of 40S ribosomal proteins RPS10/eS10 and RPS20/uS10, thereby antagonizing ZNF598-mediated 40S ubiquitination. This chain is Ubiquitin carboxyl-terminal hydrolase 21 (USP21), found in Bos taurus (Bovine).